The chain runs to 459 residues: Phosphoglucosamine mutase (459 aa).

Residue Ser102 is the Phosphoserine intermediate of the active site. 4 residues coordinate Mg(2+): Ser102, Asp243, Asp245, and Asp247. A Phosphoserine modification is found at Ser102.

Belongs to the phosphohexose mutase family. The cofactor is Mg(2+). Post-translationally, activated by phosphorylation.

It catalyses the reaction alpha-D-glucosamine 1-phosphate = D-glucosamine 6-phosphate. Its function is as follows. Catalyzes the conversion of glucosamine-6-phosphate to glucosamine-1-phosphate. The sequence is that of Phosphoglucosamine mutase from Bartonella henselae (strain ATCC 49882 / DSM 28221 / CCUG 30454 / Houston 1) (Rochalimaea henselae).